A 238-amino-acid polypeptide reads, in one-letter code: Ribosomal RNA small subunit methyltransferase G (238 aa).

S-adenosyl-L-methionine-binding positions include glycine 77, phenylalanine 82, 128–129 (AE), and arginine 147.

Belongs to the methyltransferase superfamily. RNA methyltransferase RsmG family.

It localises to the cytoplasm. Functionally, specifically methylates the N7 position of guanine in position 535 of 16S rRNA. The protein is Ribosomal RNA small subunit methyltransferase G of Geobacillus sp. (strain WCH70).